The chain runs to 1101 residues: Error-prone DNA polymerase (1101 aa).

Residues 1055–1101 (ADLGHPMDSAVGQTTPQTDSAPRPRPQPRAMHPREQAKRLFPSRDFH) are disordered. A compositionally biased stretch (polar residues) spans 1065-1074 (VGQTTPQTDS). The span at 1086–1101 (HPREQAKRLFPSRDFH) shows a compositional bias: basic and acidic residues.

It belongs to the DNA polymerase type-C family. DnaE2 subfamily.

The protein resides in the cytoplasm. It catalyses the reaction DNA(n) + a 2'-deoxyribonucleoside 5'-triphosphate = DNA(n+1) + diphosphate. DNA polymerase involved in damage-induced mutagenesis and translesion synthesis (TLS). It is not the major replicative DNA polymerase. This chain is Error-prone DNA polymerase, found in Ruegeria pomeroyi (strain ATCC 700808 / DSM 15171 / DSS-3) (Silicibacter pomeroyi).